The following is a 491-amino-acid chain: Galactose-1-phosphate uridylyltransferase (491 aa).

It belongs to the galactose-1-phosphate uridylyltransferase type 2 family.

The protein localises to the cytoplasm. The enzyme catalyses alpha-D-galactose 1-phosphate + UDP-alpha-D-glucose = alpha-D-glucose 1-phosphate + UDP-alpha-D-galactose. Its pathway is carbohydrate metabolism; galactose metabolism. This chain is Galactose-1-phosphate uridylyltransferase (galT), found in Streptococcus mutans serotype c (strain ATCC 700610 / UA159).